Here is a 293-residue protein sequence, read N- to C-terminus: ATP synthase gamma chain (293 aa).

Belongs to the ATPase gamma chain family. As to quaternary structure, F-type ATPases have 2 components, CF(1) - the catalytic core - and CF(0) - the membrane proton channel. CF(1) has five subunits: alpha(3), beta(3), gamma(1), delta(1), epsilon(1). CF(0) has three main subunits: a, b and c.

The protein resides in the cell inner membrane. Functionally, produces ATP from ADP in the presence of a proton gradient across the membrane. The gamma chain is believed to be important in regulating ATPase activity and the flow of protons through the CF(0) complex. In Nitrosospira multiformis (strain ATCC 25196 / NCIMB 11849 / C 71), this protein is ATP synthase gamma chain.